We begin with the raw amino-acid sequence, 679 residues long: Methionine--tRNA ligase (679 aa).

Positions 15-25 (PYANGPIHLGH) match the 'HIGH' region motif. Zn(2+) contacts are provided by cysteine 146, cysteine 149, cysteine 159, and cysteine 162. A 'KMSKS' region motif is present at residues 332 to 336 (KMSKS). Residue lysine 335 participates in ATP binding. One can recognise a tRNA-binding domain in the interval 578–679 (DFAKIDLRIA…EGAQPGMKVK (102 aa)).

Belongs to the class-I aminoacyl-tRNA synthetase family. MetG type 1 subfamily. In terms of assembly, homodimer. Zn(2+) is required as a cofactor.

The protein resides in the cytoplasm. It catalyses the reaction tRNA(Met) + L-methionine + ATP = L-methionyl-tRNA(Met) + AMP + diphosphate. Its function is as follows. Is required not only for elongation of protein synthesis but also for the initiation of all mRNA translation through initiator tRNA(fMet) aminoacylation. The chain is Methionine--tRNA ligase from Shewanella halifaxensis (strain HAW-EB4).